The following is a 509-amino-acid chain: 2-isopropylmalate synthase (509 aa).

A Pyruvate carboxyltransferase domain is found at 4 to 266 (VRIFDTTLRD…YTGIKTEEIY (263 aa)). 4 residues coordinate Mn(2+): Asp13, His201, His203, and Asn237. The segment at 390-509 (TLDYFHISTG…FDYQAKGEKQ (120 aa)) is regulatory domain.

This sequence belongs to the alpha-IPM synthase/homocitrate synthase family. LeuA type 1 subfamily. In terms of assembly, homodimer. Mn(2+) is required as a cofactor.

It is found in the cytoplasm. The catalysed reaction is 3-methyl-2-oxobutanoate + acetyl-CoA + H2O = (2S)-2-isopropylmalate + CoA + H(+). It functions in the pathway amino-acid biosynthesis; L-leucine biosynthesis; L-leucine from 3-methyl-2-oxobutanoate: step 1/4. Catalyzes the condensation of the acetyl group of acetyl-CoA with 3-methyl-2-oxobutanoate (2-ketoisovalerate) to form 3-carboxy-3-hydroxy-4-methylpentanoate (2-isopropylmalate). This Carboxydothermus hydrogenoformans (strain ATCC BAA-161 / DSM 6008 / Z-2901) protein is 2-isopropylmalate synthase.